The chain runs to 401 residues: Lipid-A-disaccharide synthase (401 aa).

The protein belongs to the LpxB family.

The catalysed reaction is a lipid X + a UDP-2-N,3-O-bis[(3R)-3-hydroxyacyl]-alpha-D-glucosamine = a lipid A disaccharide + UDP + H(+). Its pathway is bacterial outer membrane biogenesis; LPS lipid A biosynthesis. Functionally, condensation of UDP-2,3-diacylglucosamine and 2,3-diacylglucosamine-1-phosphate to form lipid A disaccharide, a precursor of lipid A, a phosphorylated glycolipid that anchors the lipopolysaccharide to the outer membrane of the cell. The protein is Lipid-A-disaccharide synthase of Ruegeria pomeroyi (strain ATCC 700808 / DSM 15171 / DSS-3) (Silicibacter pomeroyi).